Here is a 228-residue protein sequence, read N- to C-terminus: RING1 and YY1-binding protein (228 aa).

3 disordered regions span residues 1-21, 47-157, and 172-228; these read MTMG…PAAD, RKGT…STAQ, and DFKE…DESF. The RanBP2-type zinc-finger motif lies at 21–50; sequence DEGFWDCSVCTFRNSAEAFKCSICDVRKGT. The span at 76 to 98 shows a compositional bias: basic and acidic residues; that stretch reads PKKEKKEKVEKPDKEKPEKDKDI. Lysine 77 participates in a covalent cross-link: Glycyl lysine isopeptide (Lys-Gly) (interchain with G-Cter in SUMO2). A Phosphoserine modification is found at serine 99. Over residues 113 to 122 the composition is skewed to basic and acidic residues; that stretch reads PKSDILKDPP. Serine 123, serine 127, and serine 130 each carry phosphoserine. Positions 124-143 are enriched in polar residues; the sequence is EANSIQSANATTKTSETNHT. An interaction with GABPB1 and FANK1 region spans residues 143 to 226; it reads TSRPRLKNVD…KGDMSAVNDE (84 aa). The segment covering 179 to 204 has biased composition (low complexity); that stretch reads SSSTSSSTVTSSAGSEQQNQSSSGSE. Serine 227 bears the Phosphoserine mark.

In terms of assembly, monomer. Component of repressive BCOR complex containing Polycomb group subcomplex at least composed of BCOR, PCGF1, RING1 and RNF2/RING2. Component of PCR1-like complexes. Interacts with PCGF1. Part of a PCR1-like complex that contains AUTS2, PCGF5, RNF2, CSNK2B and RYBP. Interacts with RNF2; the interaction is direct. Interacts with CBX2, YAF2, RING1 and RNF2. Interacts with ubiquitin and ubiquitinated proteins. Interacts with ubiquitinated histone H2A. Interacts with apoptin, DEDD, FADD, CASP8, CASP10, YY1 and GABPB1. Together with GABPB1 and YY1, it forms a ternary complex, probably being the bridge factor between these two transcription factors. Interacts with MDM2, and thereby inhibits ubiquitination of TP53. Identified in a ternary complex containing MDM2, TP53 and RYBP. Interacts with FANK1; may prevent the ubiquitin-mediated proteasomal degradation of FANK1. Interacts with IFT57. Monoubiquitinated. In terms of tissue distribution, expressed in embryonic stem cells.

Its subcellular location is the nucleus. The protein localises to the cytoplasm. It localises to the nucleoplasm. In terms of biological role, component of a Polycomb group (PcG) multiprotein PRC1-like complex, a complex class required to maintain the transcriptionally repressive state of many genes, including Hox genes, throughout development. PcG PRC1-like complex acts via chromatin remodeling and modification of histones; it mediates monoubiquitination of histone H2A 'Lys-119', rendering chromatin heritably changed in its expressibility. Component of a PRC1-like complex that mediates monoubiquitination of histone H2A 'Lys-119' on the X chromosome and is required for normal silencing of one copy of the X chromosome in XX females. May stimulate ubiquitination of histone H2A 'Lys-119' by recruiting the complex to target sites. Inhibits ubiquitination and subsequent degradation of TP53, and thereby plays a role in regulating transcription of TP53 target genes. May also regulate the ubiquitin-mediated proteasomal degradation of other proteins like FANK1 to regulate apoptosis. May be implicated in the regulation of the transcription as a repressor of the transcriptional activity of E4TF1. May bind to DNA. May play a role in the repression of tumor growth and metastasis in breast cancer by down-regulating SRRM3. In Mus musculus (Mouse), this protein is RING1 and YY1-binding protein (Rybp).